The sequence spans 187 residues: Potassium-transporting ATPase KdpC subunit (187 aa).

Residues 11–31 (LILLMTVVTGALYPLAVTGIA) form a helical membrane-spanning segment.

The protein belongs to the KdpC family. The system is composed of three essential subunits: KdpA, KdpB and KdpC.

The protein localises to the cell inner membrane. In terms of biological role, part of the high-affinity ATP-driven potassium transport (or Kdp) system, which catalyzes the hydrolysis of ATP coupled with the electrogenic transport of potassium into the cytoplasm. This subunit acts as a catalytic chaperone that increases the ATP-binding affinity of the ATP-hydrolyzing subunit KdpB by the formation of a transient KdpB/KdpC/ATP ternary complex. The sequence is that of Potassium-transporting ATPase KdpC subunit from Pseudomonas entomophila (strain L48).